Consider the following 415-residue polypeptide: DNA double-strand break repair protein Mre11 (415 aa).

The Mn(2+) site is built by aspartate 10, histidine 12, aspartate 51, and asparagine 86. The active-site Proton donor is histidine 87. 3 residues coordinate Mn(2+): histidine 174, histidine 208, and histidine 210.

The protein belongs to the MRE11/RAD32 family. Homodimer. Forms a heterotetramer composed of two Mre11 subunits and two Rad50 subunits. It depends on Mn(2+) as a cofactor.

With respect to regulation, nuclease activity is regulated by Rad50. Functionally, part of the Rad50/Mre11 complex, which is involved in the early steps of DNA double-strand break (DSB) repair. The complex may facilitate opening of the processed DNA ends to aid in the recruitment of HerA and NurA. Mre11 binds to DSB ends and has both double-stranded 3'-5' exonuclease activity and single-stranded endonuclease activity. The chain is DNA double-strand break repair protein Mre11 from Pyrococcus abyssi (strain GE5 / Orsay).